The chain runs to 344 residues: Beta-1,4-galactosyltransferase 4 (344 aa).

The Cytoplasmic segment spans residues 1 to 12; sequence MGCNPPYHLSYR. A helical; Signal-anchor for type II membrane protein transmembrane segment spans residues 13-38; sequence LRLLLLFTLCLTVVGWATSNYFVGAI. The Lumenal portion of the chain corresponds to 39 to 344; that stretch reads QVIPKAKDFM…NITVDFWTAA (306 aa). Cysteines 77 and 118 form a disulfide. Residues 129 to 133, 168 to 170, and 195 to 196 contribute to the UDP-alpha-D-galactose site; these read PHRNR, FNR, and VD. A disulfide bond links Cys-189 and Cys-208. Asp-196 lines the Mn(2+) pocket. The N-linked (GlcNAc...) asparagine glycan is linked to Asn-220. UDP-alpha-D-galactose is bound by residues Tyr-224 and Trp-256. An N-acetyl-D-glucosamine-binding site is contributed by 258 to 261; that stretch reads GEDD. Mn(2+) is bound at residue His-289. 289 to 291 is a binding site for UDP-alpha-D-galactose; it reads HTR. Arg-301 contributes to the N-acetyl-D-glucosamine binding site. Residue Asn-335 is glycosylated (N-linked (GlcNAc...) asparagine).

This sequence belongs to the glycosyltransferase 7 family. As to quaternary structure, interacts with SLC35A2/UGT1. Mn(2+) serves as cofactor.

The protein localises to the golgi apparatus membrane. Its subcellular location is the secreted. The enzyme catalyses N-acetyl-D-glucosamine + UDP-alpha-D-galactose = beta-D-galactosyl-(1-&gt;4)-N-acetyl-D-glucosamine + UDP + H(+). The catalysed reaction is a beta-D-GlcNAc-(1-&gt;3)-beta-D-Gal-(1-&gt;4)-beta-D-Glc-(1&lt;-&gt;1)-Cer(d18:1(4E)) + UDP-alpha-D-galactose = a neolactoside nLc4Cer(d18:1(4E)) + UDP + H(+). It carries out the reaction 3-O-{beta-D-galactosyl-(1-&gt;3)-[6-O-sulfo-N-acetyl-beta-D-glucosaminyl-(1-&gt;6)]-N-acetyl-alpha-D-galactosaminyl}-L-seryl-[protein] + UDP-alpha-D-galactose = 3-O-{beta-D-galactosyl-(1-&gt;3)-[beta-D-galactosyl-(1-&gt;4)-6-O-sulfo-N-acetyl-beta-D-glucosaminyl-(1-&gt;6)]-N-acetyl-alpha-D-galactosaminyl}-L-seryl-[protein] + UDP + H(+). It catalyses the reaction 3-O-{beta-D-galactosyl-(1-&gt;3)-[6-O-sulfo-N-acetyl-beta-D-glucosaminyl-(1-&gt;6)]-N-acetyl-alpha-D-galactosaminyl}-L-threonyl-[protein] + UDP-alpha-D-galactose = 3-O-{beta-D-galactosyl-(1-&gt;3)-[beta-D-galactosyl-(1-&gt;4)-6-O-sulfo-N-acetyl-beta-D-glucosaminyl-(1-&gt;6)]-N-acetyl-alpha-D-galactosaminyl}-L-threonyl-[protein] + UDP + H(+). Its pathway is protein modification; protein glycosylation. It participates in glycolipid biosynthesis. Its function is as follows. Galactose (Gal) transferase involved in the synthesis of terminal N-acetyllactosamine (LacNac) unit present on glycan chains of glycoproteins and glycosphingolipids. Catalyzes the transfer of Gal residue via a beta1-&gt;4 linkage from UDP-Gal to the non-reducing terminal N-acetyl glucosamine 6-O-sulfate (6-O-sulfoGlcNAc) in the linearly growing chain of both N- and O-linked keratan sulfate proteoglycans. Cooperates with B3GNT7 N-acetyl glucosamine transferase and CHST6 and CHST1 sulfotransferases to construct and elongate mono- and disulfated disaccharide units [-&gt;3Galbeta1-&gt;4(6-sulfoGlcNAcbeta)1-&gt;] and [-&gt;3(6-sulfoGalbeta)1-&gt;4(6-sulfoGlcNAcbeta)1-&gt;] within keratan sulfate polymer. Transfers Gal residue via a beta1-&gt;4 linkage to terminal 6-O-sulfoGlcNAc within the LacNac unit of core 2 O-glycans forming 6-sulfo-sialyl-Lewis X (sLex). May contribute to the generation of sLex epitope on mucin-type glycoproteins that serve as ligands for SELL/L-selectin, a major regulator of leukocyte migration. In the biosynthesis pathway of neolacto-series glycosphingolipids, transfers Gal residue via a beta1-&gt;4 linkage to terminal GlcNAc of a lactotriaosylceramide (Lc3Cer) acceptor to form a neolactotetraosylceramide. The sequence is that of Beta-1,4-galactosyltransferase 4 from Mus musculus (Mouse).